Consider the following 1041-residue polypeptide: Nuclear pore complex protein NUP98A (1041 aa).

The segment covering 1-34 (MFGSSNPFGQSSGTSPFGSQSLFGQTSNTSSNNP) has biased composition (polar residues). Residues 1–44 (MFGSSNPFGQSSGTSPFGSQSLFGQTSNTSSNNPFAPATPFGTS) are disordered. 44 repeat units span residues 2–3 (FG), 8–9 (FG), 17–18 (FG), 23–24 (FG), 41–42 (FG), 56–57 (FG), 64–65 (FG), 79–80 (FG), 87–88 (FG), 94–95 (FG), 103–104 (FG), 109–110 (FG), 124–125 (FG), 135–136 (FG), 140–141 (FG), 146–147 (FG), 154–155 (FG), 162–163 (FG), 170–171 (FG), 178–179 (FG), 186–187 (FG), 194–195 (FG), 202–203 (FG), 210–211 (FG), 217–218 (FG), 222–223 (FG), 228–229 (FG), 236–237 (FG), 244–245 (FG), 252–253 (FG), 260–261 (FG), 268–269 (FG), 276–277 (FG), 284–285 (FG), 294–295 (FG), 300–301 (FG), 307–308 (FG), 312–313 (FG), 319–320 (FG), 329–330 (FG), 334–335 (FG), 339–340 (FG), 411–412 (FG), and 427–428 (FG). Residues 2-677 (FGSSNPFGQS…QPVAVTNPFG (676 aa)) are 65 X 2 AA repeats of F-G. The tract at residues 98–171 (PASSPFGGSS…FGATSTPSFG (74 aa)) is disordered. The span at 117 to 171 (STPQSNPFGNSTQQSQPAFGNTSFGSSTPFGATNTPAFGAPSTPSFGATSTPSFG) shows a compositional bias: polar residues. Disordered regions lie at residues 315-347 (TPSP…GGSR) and 392-447 (QRGD…TNPF). A compositionally biased stretch (low complexity) spans 430-447 (TSANPTNPFSSSTSTNPF). A run of 21 repeats spans residues 459 to 460 (FG), 466 to 467 (FG), 471 to 472 (FG), 480 to 481 (FG), 491 to 492 (FG), 497 to 498 (FG), 506 to 507 (FG), 514 to 515 (FG), 521 to 522 (FG), 533 to 534 (FG), 555 to 556 (FG), 562 to 563 (FG), 565 to 566 (FG), 573 to 574 (FG), 586 to 587 (FG), 604 to 605 (FG), 627 to 628 (FG), 632 to 633 (FG), 650 to 651 (FG), 655 to 656 (FG), and 676 to 677 (FG). Low complexity predominate over residues 517 to 526 (SSSIFGSAPG). Residues 517-560 (SSSIFGSAPGQGATPAFGNSQPSTLFNSTPSTGQTGSAFGQTGS) form a disordered region. The span at 533–560 (FGNSQPSTLFNSTPSTGQTGSAFGQTGS) shows a compositional bias: polar residues. The interval 734-860 (KYRPGENGPK…KERPYKTLSG (127 aa)) is disordered. Positions 782–793 (SRDKSILPKEQR) are enriched in basic and acidic residues. The segment covering 831-846 (TSVNANQKPNGTTRSD) has biased composition (polar residues). A Peptidase S59 domain is found at 885 to 1027 (QSDYFTEPRI…GEWKFRVEHF (143 aa)).

Belongs to the nucleoporin GLFG family. In terms of assembly, part of the nuclear pore complex (NPC). The NPC has an eight-fold symmetrical structure comprising a central transport channel and two rings, the cytoplasmic and nuclear rings, to which eight filaments are attached. The cytoplasmic filaments have loose ends, while the nuclear filaments are joined in a distal ring, forming a nuclear basket. NPCs are highly dynamic in configuration and composition, and can be devided in 3 subcomplexes, the NUP62 subcomplex, the NUP107-160 subcomplex and the NUP93 subcomplex, containing approximately 30 different nucleoporin proteins.

It localises to the nucleus. Its subcellular location is the nuclear pore complex. The sequence is that of Nuclear pore complex protein NUP98A from Arabidopsis thaliana (Mouse-ear cress).